A 150-amino-acid chain; its full sequence is Urease accessory protein UreE (150 aa).

Belongs to the UreE family.

Its subcellular location is the cytoplasm. In terms of biological role, involved in urease metallocenter assembly. Binds nickel. Probably functions as a nickel donor during metallocenter assembly. In Parasynechococcus marenigrum (strain WH8102), this protein is Urease accessory protein UreE.